The chain runs to 325 residues: Acetyl-coenzyme A carboxylase carboxyl transferase subunit alpha (325 aa).

One can recognise a CoA carboxyltransferase C-terminal domain in the interval Glu35 to Glu292.

The protein belongs to the AccA family. Acetyl-CoA carboxylase is a heterohexamer composed of biotin carboxyl carrier protein (AccB), biotin carboxylase (AccC) and two subunits each of ACCase subunit alpha (AccA) and ACCase subunit beta (AccD).

The protein resides in the cytoplasm. The enzyme catalyses N(6)-carboxybiotinyl-L-lysyl-[protein] + acetyl-CoA = N(6)-biotinyl-L-lysyl-[protein] + malonyl-CoA. It participates in lipid metabolism; malonyl-CoA biosynthesis; malonyl-CoA from acetyl-CoA: step 1/1. In terms of biological role, component of the acetyl coenzyme A carboxylase (ACC) complex. First, biotin carboxylase catalyzes the carboxylation of biotin on its carrier protein (BCCP) and then the CO(2) group is transferred by the carboxyltransferase to acetyl-CoA to form malonyl-CoA. In Anoxybacillus flavithermus (strain DSM 21510 / WK1), this protein is Acetyl-coenzyme A carboxylase carboxyl transferase subunit alpha.